We begin with the raw amino-acid sequence, 136 residues long: Cytokine-like protein 1 (136 aa).

An N-terminal signal peptide occupies residues 1–22 (MRTPGPLPVLLLLLAGAPAARP).

Specifically expressed in CD34+ hematopoietic cells.

It localises to the secreted. This is Cytokine-like protein 1 (CYTL1) from Homo sapiens (Human).